Reading from the N-terminus, the 619-residue chain is ATP-dependent DNA helicase RecQ (619 aa).

Residues 37–205 form the Helicase ATP-binding domain; it reads INAALNGQDA…LRHLNLKNLH (169 aa). 50-57 is a binding site for ATP; sequence MATGNGKS. Positions 149 to 152 match the DEAH box motif; it reads DEAH. One can recognise a Helicase C-terminal domain in the interval 229-374; it reads QLTRFVLAQK…QIEQHKLEAI (146 aa). Cys-383, Cys-400, Cys-403, and Cys-406 together coordinate Zn(2+). The 81-residue stretch at 535-615 folds into the HRDC domain; sequence ANYDKDLFAR…QEHKAILANA (81 aa).

It belongs to the helicase family. RecQ subfamily. The cofactor is Mg(2+). Zn(2+) serves as cofactor.

It carries out the reaction Couples ATP hydrolysis with the unwinding of duplex DNA by translocating in the 3'-5' direction.. The catalysed reaction is ATP + H2O = ADP + phosphate + H(+). An ATP-dependent DNA helicase which unwinds DNA in a 3'-5' direction. Plays a role in recombination. This is ATP-dependent DNA helicase RecQ from Haemophilus influenzae (strain ATCC 51907 / DSM 11121 / KW20 / Rd).